Consider the following 412-residue polypeptide: Cysteate synthase (412 aa).

Position 105 is an N6-(pyridoxal phosphate)lysine (Lys-105). Residues Asn-131 and Thr-382 each contribute to the pyridoxal 5'-phosphate site.

This sequence belongs to the threonine synthase family. Cysteate synthase subfamily. In terms of assembly, homotrimer. Pyridoxal 5'-phosphate is required as a cofactor.

It carries out the reaction O-phospho-L-serine + sulfite + H(+) = L-cysteate + phosphate. It functions in the pathway cofactor biosynthesis; coenzyme M biosynthesis. Functionally, specifically catalyzes the beta-elimination of phosphate from L-phosphoserine and the beta-addition of sulfite to the dehydroalanine intermediate to produce L-cysteate. The chain is Cysteate synthase from Methanocorpusculum labreanum (strain ATCC 43576 / DSM 4855 / Z).